Reading from the N-terminus, the 209-residue chain is ATP phosphoribosyltransferase (209 aa).

It belongs to the ATP phosphoribosyltransferase family. Short subfamily. In terms of assembly, heteromultimer composed of HisG and HisZ subunits.

Its subcellular location is the cytoplasm. The catalysed reaction is 1-(5-phospho-beta-D-ribosyl)-ATP + diphosphate = 5-phospho-alpha-D-ribose 1-diphosphate + ATP. It participates in amino-acid biosynthesis; L-histidine biosynthesis; L-histidine from 5-phospho-alpha-D-ribose 1-diphosphate: step 1/9. In terms of biological role, catalyzes the condensation of ATP and 5-phosphoribose 1-diphosphate to form N'-(5'-phosphoribosyl)-ATP (PR-ATP). Has a crucial role in the pathway because the rate of histidine biosynthesis seems to be controlled primarily by regulation of HisG enzymatic activity. This Caldicellulosiruptor saccharolyticus (strain ATCC 43494 / DSM 8903 / Tp8T 6331) protein is ATP phosphoribosyltransferase.